The sequence spans 171 residues: S-ribosylhomocysteine lyase (171 aa).

Fe cation-binding residues include H54, H58, and C128.

Belongs to the LuxS family. In terms of assembly, homodimer. Requires Fe cation as cofactor.

It catalyses the reaction S-(5-deoxy-D-ribos-5-yl)-L-homocysteine = (S)-4,5-dihydroxypentane-2,3-dione + L-homocysteine. Functionally, involved in the synthesis of autoinducer 2 (AI-2) which is secreted by bacteria and is used to communicate both the cell density and the metabolic potential of the environment. The regulation of gene expression in response to changes in cell density is called quorum sensing. Catalyzes the transformation of S-ribosylhomocysteine (RHC) to homocysteine (HC) and 4,5-dihydroxy-2,3-pentadione (DPD). The polypeptide is S-ribosylhomocysteine lyase (Serratia proteamaculans (strain 568)).